Reading from the N-terminus, the 328-residue chain is MPLHNLTRFPRLEFIGAPTPLEYLPRFSDYLGREIFIKRDDVTPMAMGGNKLRKLEFLAADALREGADTLITAGAIQSNHVRQTAAVAAKLGLHCVALLENPIGTTAENYLTNGNRLLLDLFNTQIEMCDALTDPNAQLEELATRVEAQGFRPYVIPVGGSNALGALGYVESALEIAQQCEGAVNISSVVVASGSAGTHAGLAVGLEHLMPESELIGVTVSRSVADQLPKVVNLQQAIAKELELTASVEILLWDDYFAPGYGVPNDEGMEAVKLLARLEGILLDPVYTGKAMAGLIDGISQKRFKDEGPILFIHTGGAPALFAYHPHV.

N6-(pyridoxal phosphate)lysine is present on Lys-51.

It belongs to the ACC deaminase/D-cysteine desulfhydrase family. As to quaternary structure, homodimer. Pyridoxal 5'-phosphate is required as a cofactor.

The enzyme catalyses D-cysteine + H2O = hydrogen sulfide + pyruvate + NH4(+) + H(+). Catalyzes the alpha,beta-elimination reaction of D-cysteine and of several D-cysteine derivatives. It could be a defense mechanism against D-cysteine. In Escherichia coli O157:H7, this protein is D-cysteine desulfhydrase.